Reading from the N-terminus, the 447-residue chain is Tubulin beta chain (447 aa).

Residues glutamine 11, glutamate 69, serine 138, glycine 142, threonine 143, glycine 144, asparagine 204, and asparagine 226 each contribute to the GTP site. Glutamate 69 contacts Mg(2+). The interval 419 to 447 (VSEYQQYQDATADEEGEYEDEDQEAEDDM) is disordered. The segment covering 429 to 447 (TADEEGEYEDEDQEAEDDM) has biased composition (acidic residues).

This sequence belongs to the tubulin family. As to quaternary structure, dimer of alpha and beta chains. A typical microtubule is a hollow water-filled tube with an outer diameter of 25 nm and an inner diameter of 15 nM. Alpha-beta heterodimers associate head-to-tail to form protofilaments running lengthwise along the microtubule wall with the beta-tubulin subunit facing the microtubule plus end conferring a structural polarity. Microtubules usually have 13 protofilaments but different protofilament numbers can be found in some organisms and specialized cells. Mg(2+) is required as a cofactor.

It is found in the cytoplasm. It localises to the cytoskeleton. In terms of biological role, tubulin is the major constituent of microtubules, a cylinder consisting of laterally associated linear protofilaments composed of alpha- and beta-tubulin heterodimers. Microtubules grow by the addition of GTP-tubulin dimers to the microtubule end, where a stabilizing cap forms. Below the cap, tubulin dimers are in GDP-bound state, owing to GTPase activity of alpha-tubulin. This Hordeum vulgare (Barley) protein is Tubulin beta chain (TUBB).